The primary structure comprises 168 residues: Group 2 truncated hemoglobin 3-1 (168 aa).

A heme b-binding site is contributed by His-98.

Belongs to the truncated hemoglobin family. Group II subfamily. Homodimer when ferric. As to expression, mainly expressed in root nodules, but barely in leaves, roots, stems, flowers and fruits.

In terms of biological role, hemoglobin-like protein that exhibits an unusual concentration-independent binding of O(2) and CO. Required for general plant development and during nodulation. May promote shoot organogenesis from root explants. In Lotus japonicus (Lotus corniculatus var. japonicus), this protein is Group 2 truncated hemoglobin 3-1.